Here is a 160-residue protein sequence, read N- to C-terminus: Cytochrome b6-f complex subunit 4 (160 aa).

3 consecutive transmembrane segments (helical) span residues 36-56 (LLYI…GLAV), 95-115 (LLGI…PFIE), and 131-151 (AFFL…CLPI).

It belongs to the cytochrome b family. PetD subfamily. The 4 large subunits of the cytochrome b6-f complex are cytochrome b6, subunit IV (17 kDa polypeptide, PetD), cytochrome f and the Rieske protein, while the 4 small subunits are PetG, PetL, PetM and PetN. The complex functions as a dimer.

The protein localises to the cellular thylakoid membrane. In terms of biological role, component of the cytochrome b6-f complex, which mediates electron transfer between photosystem II (PSII) and photosystem I (PSI), cyclic electron flow around PSI, and state transitions. This Prochlorococcus marinus (strain SARG / CCMP1375 / SS120) protein is Cytochrome b6-f complex subunit 4.